The following is a 1235-amino-acid chain: MSLPRRPGPSPPHEEPRRYRQSGSRRSRPPPADVETGYAPMAGERPSQQQRVPSISSFPETLPSPNPNVERDPLAPTPEPAHPSGIPQRKRSLIRPERNRIGKDHPNYHYRKHAANMNTLPSSTGHDPIYEDLEGATDDVSGTGSRNDDDVSEESPPRRKHSTKMQVIETEKSGDERRRRRKSDTTKHGKIVKASKGKREKSGGLPTPSFWNIYCGFVTFWCPGFVLKCFGMPEMAQQRAWREKMGLISIILLIMGFVGFITFGFTQVVCGKPPLRLRINEVGSGYMIFHGSAYDLTKSHHPPAEGIPRRPDGLGANVIYDLPQHYGGQDGSFLFQNVNGKCKGLITKQENSDVPSDKSGNLAWYFPCNTFNQDGSSKPNTTIPYYLGYACHTTANARDSFYLGLKSSADVYFTWDDIKNSSRNLVVYSGHVLDLDLLHWFNDTQVTYPARFKELRDKNTAGNQAIRGRDITHAFQSSKDKQIAECFEEIIKVGSVDTETVGCIASKVVLYVSLVLILAVVLARFVLALIFQWFISKTYAAAKTSQTSDQRKRNRQIEDWTEDIYRAPPRLPGEVGSSVAGSSDRQSKRSSAFLPTHSRFSTVYGNERGNRKPGLPTTMASQNAAGQLLHPGTIYGQGNESRSSFLKSDAYGSSSSPADGPGPAGFIHEAVVPQPPSDWMPFGFPLAHTICLVTAYSEGEMGVRTTLDSIAMTDYPNSHKVILVICDGIIKGHGEEHSTPDIILGMMKDHTIHPDDVEPFSYVAVATGSKRHNMAKVYTGFYDYGTNSAIPLEKQQRVPMMMVVKCGTPAEASKSKPGNRGKRDSQIILMSFLQKVMFDERMTELEYEMFNGLWKITGISPDFYEIVLMVDADTKVFPDSLTHMISAMVKDPEIMGLCGETKIANKRASWVSAIQVFEYFVSHHLAKAFESVFGGVTCLPGCFCMYRIKAPKGAQNYWVPILANPDVVEHYSENVVDTLHKKNLLLLGEDRYLSTLMLRTFPKRKQVFVPQAVCKTTVPDEFMVLLSQRRRWINSTIHNLMELVLVRDLCGTFCFSMQFIVGIELIGTLVLPAAIAFTFYVVIISIINSPPQIIPLVLLGLILGLPAILVVVTAHSWSYIIWMFIYLLSLPVWNFVLPTYAFWKFDDFSWGDTRKTAGEKSSKGGHGEAEGEFDSSMITMKRWAEFERDRRVRSTYWAGSRDNVISGVGGSNGWGSSQPRGHEQGRHFDDYFSDA.

The segment covering 1-11 (MSLPRRPGPSP) has biased composition (pro residues). The segment at 1–203 (MSLPRRPGPS…ASKGKREKSG (203 aa)) is disordered. Residues 1-212 (MSLPRRPGPS…GGLPTPSFWN (212 aa)) are Cytoplasmic-facing. Over residues 19 to 28 (YRQSGSRRSR) the composition is skewed to basic residues. The span at 46–59 (PSQQQRVPSISSFP) shows a compositional bias: polar residues. A compositionally biased stretch (basic and acidic residues) spans 94–107 (IRPERNRIGKDHPN). Positions 116–125 (NMNTLPSSTG) are enriched in polar residues. Residues 169–187 (ETEKSGDERRRRRKSDTTK) show a composition bias toward basic and acidic residues. Over residues 188-199 (HGKIVKASKGKR) the composition is skewed to basic residues. A helical transmembrane segment spans residues 213–233 (IYCGFVTFWCPGFVLKCFGMP). The Extracellular segment spans residues 234-244 (EMAQQRAWREK). The helical transmembrane segment at 245-265 (MGLISIILLIMGFVGFITFGF) threads the bilayer. Topologically, residues 266-514 (TQVVCGKPPL…ASKVVLYVSL (249 aa)) are cytoplasmic. A helical transmembrane segment spans residues 515–535 (VLILAVVLARFVLALIFQWFI). Topologically, residues 536-1065 (SKTYAAAKTS…SMQFIVGIEL (530 aa)) are extracellular. The segment at 545-592 (SQTSDQRKRNRQIEDWTEDIYRAPPRLPGEVGSSVAGSSDRQSKRSSA) is disordered. Residues 549–558 (DQRKRNRQIE) show a composition bias toward basic and acidic residues. The N-linked (GlcNAc...) asparagine glycan is linked to asparagine 639. A disordered region spans residues 645 to 670 (FLKSDAYGSSSSPADGPGPAGFIHEA). Residues 648–665 (SDAYGSSSSPADGPGPAG) show a composition bias toward low complexity. Asparagine 1034 carries an N-linked (GlcNAc...) asparagine glycan. A helical membrane pass occupies residues 1066–1086 (IGTLVLPAAIAFTFYVVIISI). The Cytoplasmic segment spans residues 1087–1092 (INSPPQ). A helical membrane pass occupies residues 1093–1113 (IIPLVLLGLILGLPAILVVVT). Residues 1114-1116 (AHS) lie on the Extracellular side of the membrane. The chain crosses the membrane as a helical span at residues 1117-1137 (WSYIIWMFIYLLSLPVWNFVL). At 1138–1235 (PTYAFWKFDD…RHFDDYFSDA (98 aa)) the chain is on the cytoplasmic side. The disordered stretch occupies residues 1201–1235 (RDNVISGVGGSNGWGSSQPRGHEQGRHFDDYFSDA). The span at 1220–1235 (RGHEQGRHFDDYFSDA) shows a compositional bias: basic and acidic residues.

Belongs to the chitin synthase family. Class IV subfamily.

It is found in the cell membrane. It carries out the reaction [(1-&gt;4)-N-acetyl-beta-D-glucosaminyl](n) + UDP-N-acetyl-alpha-D-glucosamine = [(1-&gt;4)-N-acetyl-beta-D-glucosaminyl](n+1) + UDP + H(+). Polymerizes chitin, a structural polymer of the cell wall and septum, by transferring the sugar moiety of UDP-GlcNAc to the non-reducing end of the growing chitin polymer. In Neurospora crassa (strain ATCC 24698 / 74-OR23-1A / CBS 708.71 / DSM 1257 / FGSC 987), this protein is Chitin synthase 4 (chs-4).